Reading from the N-terminus, the 193-residue chain is Holliday junction branch migration complex subunit RuvA (193 aa).

Residues Met1–Leu64 are domain I. The interval Thr65–Leu139 is domain II. The interval Leu139–Ala143 is flexible linker. Positions Ser144–Ala193 are domain III.

The protein belongs to the RuvA family. Homotetramer. Forms an RuvA(8)-RuvB(12)-Holliday junction (HJ) complex. HJ DNA is sandwiched between 2 RuvA tetramers; dsDNA enters through RuvA and exits via RuvB. An RuvB hexamer assembles on each DNA strand where it exits the tetramer. Each RuvB hexamer is contacted by two RuvA subunits (via domain III) on 2 adjacent RuvB subunits; this complex drives branch migration. In the full resolvosome a probable DNA-RuvA(4)-RuvB(12)-RuvC(2) complex forms which resolves the HJ.

The protein localises to the cytoplasm. In terms of biological role, the RuvA-RuvB-RuvC complex processes Holliday junction (HJ) DNA during genetic recombination and DNA repair, while the RuvA-RuvB complex plays an important role in the rescue of blocked DNA replication forks via replication fork reversal (RFR). RuvA specifically binds to HJ cruciform DNA, conferring on it an open structure. The RuvB hexamer acts as an ATP-dependent pump, pulling dsDNA into and through the RuvAB complex. HJ branch migration allows RuvC to scan DNA until it finds its consensus sequence, where it cleaves and resolves the cruciform DNA. This is Holliday junction branch migration complex subunit RuvA from Burkholderia vietnamiensis (strain G4 / LMG 22486) (Burkholderia cepacia (strain R1808)).